The following is a 406-amino-acid chain: S-adenosylmethionine synthase (406 aa).

Glycine 141–aspartate 146 is an ATP binding site.

The protein belongs to the AdoMet synthase 2 family. In terms of assembly, homodimer. Mg(2+) serves as cofactor.

It carries out the reaction L-methionine + ATP + H2O = S-adenosyl-L-methionine + phosphate + diphosphate. It participates in amino-acid biosynthesis; S-adenosyl-L-methionine biosynthesis; S-adenosyl-L-methionine from L-methionine: step 1/1. Catalyzes the formation of S-adenosylmethionine from methionine and ATP. This Methanocaldococcus jannaschii (strain ATCC 43067 / DSM 2661 / JAL-1 / JCM 10045 / NBRC 100440) (Methanococcus jannaschii) protein is S-adenosylmethionine synthase (mat).